The primary structure comprises 1357 residues: MAYSYTEKKRIRKDFSKLPDVMDVPYLLAIQLDSYREFLQAGATKDQFRDVGLHAAFKSVFPIISYSGNAALEYVGYRLGEPAFDVKECVLRGVTFAVPLRVKVRLIIFDKESSNKAIKDIKEQEVYMGEIPLMTENGTFVINGTERVIVSQLHRSPGVFFDHDRGKTHSSGKLLYSARIIPYRGSWLDFEFDPKDCVFVRIDRRRKLPASVLLRALGYTTEEVLDAFYTTNVFHVKGEGLSLELVPQRLRGEVAVLDIQDDKGKVIVEQGRRITARHINQLEKAGIKELDVPLDYVLGRTTAKAIVHPATGEILAECNTELSTEILAKIAKAGVVRIETLYTNDIDCGPFVSDTLKIDSTSNQLEALVEIYRMMRPGEPPTKDAAETLFNNLFFSPERYDLSAVGRMKFNRRIGRTEIEGSGVLCKEDIVAVLKTLVDIRNGKGIVDDIDHLGNRRVRCVGEMAENQFRVGLVRVERAVKERLSMAESEGLMPQDLINAKPVAAAVKEFFGSSQLSQFMDQNNPLSEITHKRRVSALGPGGLTRERAGFEVRDVHPTHYGRVCPIETPEGPNIGLINSLAAYARTNQYGFLESPYRVVKEGVVTDDIVFLSAIEEADHVIAQASATMNEQKVLIDELVAVRHLNEFTVKAPEDVTLMDVSPKQVVSVAASLIPFLEHDDANRALMGSNMQRQAVPTLRADKPLVGTGMERNVARDSGVCVVARRGGVIDSVDASRIVVRVADDEVETGEAGVDIYNLTKYTRSNQNTCINQRPLVSKGDRVQRSDIMADGPSTDMGELALGQNMRIAFMAWNGFNFEDSICLSERVVQEDRFTTIHIQELTCVARDTKLGPEEITADIPNVGEAALNKLDEAGIVYVGAEVGAGDILVGKVTPKGETQLTPEEKLLRAIFGEKASDVKDTSLRVPTGTKGTVIDVQVFTRDGVERDARALSIEKSQLDEIRKDLNEEFRIVEGATFERLRSALVGHKAEGGAGLKKGQDITDEVLDGLEHGQWFKLRMAEDALNEQLEKAQAYIVDRRRLLDDKFEDKKRKLQQGDDLAPGVLKIVKVYLAIRRRIQPGDKMAGRHGNKGVVSVIMPVEDMPHDANGTPVDVVLNPLGVPSRMNVGQILETHLGLAAKGLGEKINRMVEEQRKVAELRTFLDEIYNQIGGRNEDLDSFSDQEILDLAKNLRGGVPMATPVFDGAKESEIKAMLKLADLPESGQMQLTDGRTGNKFERPVTVGYMYMLKLNHLVDDKMHARSTGSYSLVTQQPLGGKAQFGGQRFGEMEVWALEAYGAAYTLQEMLTVKSDDVNGRTKMYKNIVDGDHRMEPGMPESFNVLIKEIRSLGIDIDLETE.

The protein belongs to the RNA polymerase beta chain family. As to quaternary structure, the RNAP catalytic core consists of 2 alpha, 1 beta, 1 beta' and 1 omega subunit. When a sigma factor is associated with the core the holoenzyme is formed, which can initiate transcription.

It catalyses the reaction RNA(n) + a ribonucleoside 5'-triphosphate = RNA(n+1) + diphosphate. Functionally, DNA-dependent RNA polymerase catalyzes the transcription of DNA into RNA using the four ribonucleoside triphosphates as substrates. This Pseudomonas fluorescens (strain Pf0-1) protein is DNA-directed RNA polymerase subunit beta.